Reading from the N-terminus, the 1603-residue chain is Gag-Pol polyprotein (1603 aa).

A compositionally biased stretch (basic and acidic residues) spans 128 to 141 (VGETTVQRDAKMAP). The disordered stretch occupies residues 128 to 150 (VGETTVQRDAKMAPEETATPKTV). The PPXY motif motif lies at 172–175 (PPPY). Residues 180 to 184 (LYPSL) carry the LYPX(n)L motif motif. The disordered stretch occupies residues 181–217 (YPSLAGVGEQQGQGGDTPPGAEQSRAEPGHAGQAPGP). Involved in capsid protein dimerization stretches follow at residues 217–259 (PALT…KLIT), 290–298 (HDVTNLMRV), and 351–362 (GMVGNPQGQAAL). The Nuclear export signal motif lies at 219–229 (LTDWARVREEL). 2 CCHC-type zinc fingers span residues 507 to 524 (GLCY…QCPK) and 533 to 550 (ERCQ…QCRK). A Nuclear/nucleolar localization signal motif is present at residues 524–527 (KKRK). The segment at 543-575 (HNAKQCRKRDGNQGQRPGKGLSSGPWPGPEPPA) is disordered. A Peptidase A2 domain is found at 609 to 690 (ITALLDSGAD…VRGSILGRDC (82 aa)). The active-site For protease activity; shared with dimeric partner is the aspartate 614. The Reverse transcriptase domain occupies 750–938 (LQLGHIEPSL…PGVQYLGYKL (189 aa)). Aspartate 815, aspartate 890, aspartate 891, aspartate 1158, glutamate 1192, aspartate 1213, and aspartate 1272 together coordinate Mg(2+). The region spanning 1149–1280 (PVPGPTVFTD…ADSQATFQAY (132 aa)) is the RNase H type-1 domain. The Integrase-type zinc-finger motif lies at 1280-1321 (YPLREAKDLHTALHIGPRALSKACNISMQQAREVVQTCPHCN). Residues histidine 1289, histidine 1293, cysteine 1317, and cysteine 1320 each coordinate Zn(2+). Positions 1333-1496 (RGLGPLQIWQ…TPIQKHWRPT (164 aa)) constitute an Integrase catalytic domain. Mg(2+)-binding residues include aspartate 1344, aspartate 1401, and glutamate 1437. The segment at residues 1502–1550 (PPVKIRIETGEWEKGWNVLVWGRGYAAVKNRDTDKVIWVPSRKVKPDIT) is a DNA-binding region (integrase-type). The tract at residues 1548-1567 (DITQKDEVTKKDEASPLFAG) is involved in homooctamerization. The interval 1569 to 1603 (SDWIPWEDEQEGLQGETASNKQERPGEDTLAANES) is disordered.

Active as a homodimer. As to quaternary structure, homodimer. Homomultimer. Homohexamer. In terms of assembly, homodimer; further associates as a homooctamer. Heterodimer of alpha and beta subunits. Three forms of RT exist: alpha-alpha (alpha-Pol), beta-beta (beta-Pol), and alpha-beta, with the major form being the heterodimer. Both the polymerase and RNase H active sites are located in the alpha subunit of heterodimeric RT alpha-beta. Requires Mg(2+) as cofactor. The cofactor is Mn(2+). Specific enzymatic cleavages in vivo yield mature proteins. In terms of processing, capsid protein p27: The cleavage at the C-terminus is slowly trimmed by the viral protease, sometimes being cut internally thereby generating the short version of the capsid protein and a capsid protein C-terminally extended by 3 amino acids in a ratio of 2:1.

It localises to the virion. It carries out the reaction DNA(n) + a 2'-deoxyribonucleoside 5'-triphosphate = DNA(n+1) + diphosphate. The catalysed reaction is Endonucleolytic cleavage to 5'-phosphomonoester.. Its function is as follows. Capsid protein p27: Self-associates to form the irregular polyhedron core composed of hexamers and pentamers, that encapsulates the genomic RNA-nucleocapsid complex. Assembles as a tube in vitro. Binds to inositol hexakisphosphate (IP6), which allows the assembly of the polyhedral capsid. Functionally, plays a role in the oligomerization of the Gag polyprotein and in the stabilization of the immature particle. Essential layering element during tube assembly. Allows the cooperative binging of Gag to the host plasma membrane. Binds strongly to viral nucleic acids and promotes their packaging. Plays a role in the maturation-stabilization of the viral dimeric RNA via highly structured zinc-binding motifs. In terms of biological role, the aspartyl protease mediates proteolytic cleavages of Gag and Gag-Pol polyproteins during or shortly after the release of the virion from the plasma membrane. Cleavages take place as an ordered, step-wise cascade to yield mature proteins. This process is called maturation. Displays maximal activity during the budding process just prior to particle release from the cell. Its function is as follows. Catalyzes viral DNA integration into the host chromosome, by performing a series of DNA cutting and joining reactions. This recombination event is an essential step in the viral replication cycle. Has a strong preference for using the 3'-OH at the viral DNA end as a nucleophile. This Gallus gallus (Chicken) protein is Gag-Pol polyprotein (gag-pol).